The chain runs to 429 residues: Xaa-Pro dipeptidase (429 aa).

5 residues coordinate Mn(2+): Asp241, Asp252, His334, Glu372, and Glu411.

The protein belongs to the peptidase M24B family. Bacterial-type prolidase subfamily. It depends on Mn(2+) as a cofactor.

The catalysed reaction is Xaa-L-Pro dipeptide + H2O = an L-alpha-amino acid + L-proline. Functionally, splits dipeptides with a prolyl residue in the C-terminal position. In Marinobacter nauticus (strain ATCC 700491 / DSM 11845 / VT8) (Marinobacter aquaeolei), this protein is Xaa-Pro dipeptidase.